The primary structure comprises 509 residues: Monofunctional riboflavin biosynthesis protein RIBA 3, chloroplastic (509 aa).

Residues 1–43 (MMDSALYHPRIFFAHSFINGLYSSPRFANTCWRLVSRSSWEIK) constitute a chloroplast transit peptide. Residues 44–302 (ASENSDRNVF…LTDLIRYRRK (259 aa)) are inactive DHBP synthase. Residues 125 to 126 (GD) and 240 to 244 (RAGHT) contribute to the D-ribulose 5-phosphate site. Residues 303 to 509 (RDKLVERITV…ISDNNDQPLA (207 aa)) are GTP cyclohydrolase II. 353–357 (RVHSE) contributes to the GTP binding site. Residues cysteine 358, cysteine 369, and cysteine 371 each coordinate Zn(2+). GTP-binding positions include glutamine 374, 397–399 (EGR), and threonine 419. Aspartate 431 functions as the Proton acceptor; for GTP cyclohydrolase activity in the catalytic mechanism. The active-site Nucleophile; for GTP cyclohydrolase activity is arginine 433. GTP is bound by residues threonine 454 and lysine 459.

This sequence in the N-terminal section; belongs to the DHBP synthase family. It in the C-terminal section; belongs to the GTP cyclohydrolase II family. Zn(2+) is required as a cofactor. Expressed in leaves, shoots, roots, flowers and siliques.

It is found in the plastid. The protein resides in the chloroplast. The enzyme catalyses GTP + 4 H2O = 2,5-diamino-6-hydroxy-4-(5-phosphoribosylamino)-pyrimidine + formate + 2 phosphate + 3 H(+). It functions in the pathway cofactor biosynthesis; riboflavin biosynthesis; 5-amino-6-(D-ribitylamino)uracil from GTP: step 1/4. Involved in riboflavin biosynthesis. Catalyzes the conversion of GTP to 2,5-diamino-6-ribosylamino-4(3H)-pyrimidinone 5'-phosphate (DARP), formate and pyrophosphate. RIBA2 and RIBA3 together are not able to complement the loss of function of RIBA1. The protein is Monofunctional riboflavin biosynthesis protein RIBA 3, chloroplastic (RIBA3) of Arabidopsis thaliana (Mouse-ear cress).